The chain runs to 1889 residues: Bromodomain adjacent to zinc finger domain protein 2A (1889 aa).

3 disordered regions span residues 1 to 59 (MEME…NGLS), 384 to 433 (FGLN…SPAA), and 479 to 526 (TTPV…GAVA). Polar residues predominate over residues 35–59 (TNGSPMNFPQQGKSLNGDVNVNGLS). A required for TTF1 binding region spans residues 332-726 (EGNPVISALD…ESQTPVQGQA (395 aa)). The segment covering 423–433 (PAVSPTASPAA) has biased composition (low complexity). Composition is skewed to polar residues over residues 479 to 489 (TTPVTSPQGSP) and 498 to 509 (QTVSPARKNVSS). Thr499 is modified (phosphothreonine). Ser501 is modified (phosphoserine). The 72-residue stretch at 538–609 (IATPEEVRLP…EHFSFSPRMP (72 aa)) folds into the MBD domain. Phosphothreonine is present on Thr540. Ser605 carries the phosphoserine modification. Residues 638 to 791 (QAITGKRGRP…ARPSCRADKT (154 aa)) form a disordered region. 2 consecutive DNA-binding regions (a.T hook) follow at residues 641–653 (TGKR…NEKA) and 662–674 (KRGR…IKMP). Residues 648–660 (RNNEKAKNKEVPK) are compositionally biased toward basic and acidic residues. The segment covering 661–670 (VKRGRGRPPK) has biased composition (basic residues). The residue at position 672 (Lys672) is an N6-acetyllysine; by KAT8. Over residues 678-701 (NKTDNRLPKKLETQEILSEDDKAK) the composition is skewed to basic and acidic residues. Residues 686-813 (KKLETQEILS…QQAILEEMKK (128 aa)) are a coiled coil. The segment covering 702 to 713 (MTKNKKKMRQKV) has biased composition (basic residues). Polar residues predominate over residues 716–726 (GESQTPVQGQA). Basic and acidic residues-rich tracts occupy residues 731–740 (KQDTKSLKQK) and 748–791 (AEKE…ADKT). N6-acetyllysine is present on Lys790. In terms of domain architecture, DDT spans 839-904 (SRAFSDCLTI…LKAALHDPGL (66 aa)). Lys857 participates in a covalent cross-link: Glycyl lysine isopeptide (Lys-Gly) (interchain with G-Cter in SUMO2). A disordered region spans residues 1039–1063 (EETSGIEEEEEEENTTAVHGRRGRK). Residue Ser1042 is modified to Phosphoserine. A compositionally biased stretch (acidic residues) spans 1042-1052 (SGIEEEEEEEN). Residues Lys1141 and Lys1163 each participate in a glycyl lysine isopeptide (Lys-Gly) (interchain with G-Cter in SUMO2) cross-link. 2 disordered regions span residues 1147–1247 (LMEV…GQSQ) and 1269–1397 (LSSS…GRPP). Ser1174 carries the post-translational modification Phosphoserine. A DNA-binding region (a.T hook 3) is located at residues 1176 to 1188 (ARSRGRPRKPKPG). Composition is skewed to polar residues over residues 1190–1231 (LQPQ…QPSS), 1269–1278 (LSSSVLTPDS), and 1331–1346 (DQPT…SKPM). Phosphoserine is present on residues Ser1374, Ser1377, and Ser1383. The a.T hook 4 DNA-binding region spans 1390–1402 (PKRRGRPPSKFFK). Phosphoserine is present on Ser1545. Glycyl lysine isopeptide (Lys-Gly) (interchain with G-Cter in SUMO2) cross-links involve residues Lys1662 and Lys1695. Residues 1662 to 1712 (KVTCLVCRKGDNDEFLLLCDGCDRGCHIYCHRPKMEAVPEGDWFCAVCLSQ) form a PHD-type zinc finger. Positions 1720–1778 (QRPGFPKRGQKRKSSFPLTFPEGDSRRRMLSRSRDSPAVPRYPEDGLSPPKRRRHSMRS) are disordered. Ser1733 carries the phosphoserine modification. A Phosphothreonine modification is found at Thr1738. Basic and acidic residues predominate over residues 1742-1754 (GDSRRRMLSRSRD). Phosphoserine occurs at positions 1755 and 1767. The span at 1769 to 1778 (PKRRRHSMRS) shows a compositional bias: basic residues. One can recognise a Bromo domain in the interval 1777–1881 (RSHHSDLTFC…RFFESRWEEF (105 aa)).

It belongs to the WAL family. As to quaternary structure, component of the NoRC-1 ISWI chromatin remodeling complex at least composed of SMARCA1 and BAZ2A/TIP5, which regulates the spacing of histone octamers on the DNA template to facilitate access to DNA. Within the NoRC-1 ISWI chromatin remodeling complex interacts with SMARCA1; the interaction is direct. Component of the NoRC-5 ISWI chromatin remodeling complex (also called the NoRC nucleolar-remodeling complex), at least composed of SMARCA5/SNF2H and BAZ2A/TIP5, which regulates the spacing of histone octamers on the DNA template to facilitate access to DNA. Within the NoRC-5 ISWI chromatin remodeling complexes interacts with SMARCA5/SNF2H; the interaction is direct. Interacts with TTF1; the interaction is required for recruitment of the NoRC-5 ISWI chromatin remodeling complex to rDNA. Interacts with HDAC1. Interacts with SIN3A. Interacts with DNMT1 and DNM3B. Interacts with BEND3 and USP21. Ubiquitinated. Deubiquitinated by USP21 leading to its stabilization. In terms of processing, acetylation at Lys-672 by KAT8/MOF promotes its dissociation from pRNA, affecting heterochromatin formation, nucleosome positioning and rDNA silencing. Deacetylation by SIRT1 in late S phase enhances pRNA-binding, allowing de novo DNA methylation and heterochromatin formation. Acetylation is high during S phase and declines to background levels in late S phase when the silent copies of rRNA genes are replicated.

The protein localises to the nucleus. It is found in the nucleolus. Functionally, regulatory subunit of the ATP-dependent NoRC-1 and NoRC-5 ISWI chromatin remodeling complexes, which form ordered nucleosome arrays on chromatin and facilitate access to DNA during DNA-templated processes such as DNA replication, transcription, and repair. Both complexes regulate the spacing of nucleosomes along the chromatin and have the ability to slide mononucleosomes to the center of a DNA template. Directly stimulates the ATPase activity of SMARCA5 in the NoRC-5 ISWI chromatin remodeling complex. The NoRC-1 ISWI chromatin remodeling complex has a lower ATP hydrolysis rate than the NoRC-5 ISWI chromatin remodeling complex. Within the NoRC-5 ISWI chromatin remodeling complex, mediates silencing of a fraction of rDNA by recruiting histone-modifying enzymes and DNA methyltransferases, leading to heterochromatin formation and transcriptional silencing. In the complex, it plays a central role by being recruited to rDNA and by targeting chromatin modifying enzymes such as HDAC1, leading to repress RNA polymerase I transcription. Recruited to rDNA via its interaction with TTF1 and its ability to recognize and bind histone H4 acetylated on 'Lys-16' (H4K16ac), leading to deacetylation of H4K5ac, H4K8ac, H4K12ac but not H4K16ac. Specifically binds pRNAs, 150-250 nucleotide RNAs that are complementary in sequence to the rDNA promoter; pRNA-binding is required for heterochromatin formation and rDNA silencing. The sequence is that of Bromodomain adjacent to zinc finger domain protein 2A (Baz2a) from Mus musculus (Mouse).